The primary structure comprises 292 residues: NAD kinase (292 aa).

Residue aspartate 74 is the Proton acceptor of the active site. NAD(+)-binding positions include 74-75, 147-148, aspartate 177, and 188-193; these read DG, NE, and TGYSLS.

The protein belongs to the NAD kinase family. A divalent metal cation is required as a cofactor.

Its subcellular location is the cytoplasm. It carries out the reaction NAD(+) + ATP = ADP + NADP(+) + H(+). Involved in the regulation of the intracellular balance of NAD and NADP, and is a key enzyme in the biosynthesis of NADP. Catalyzes specifically the phosphorylation on 2'-hydroxyl of the adenosine moiety of NAD to yield NADP. This Cytophaga hutchinsonii (strain ATCC 33406 / DSM 1761 / CIP 103989 / NBRC 15051 / NCIMB 9469 / D465) protein is NAD kinase.